A 545-amino-acid chain; its full sequence is E3 ubiquitin-protein ligase ipaH9.8 (545 aa).

Positions 1-242 (MLPINNNFSL…YHGPRIYFSM (242 aa)) are interaction with target proteins. LRR repeat units follow at residues 57–77 (NSDELRLDRLNLSSLPDNLPA), 78–99 (QITLLNVSYNQLTNLPELPVTL), 100–117 (KKLYSASNKLSELPVLPP), 118–139 (ALESLQVQHNELENLPALPDSL), 140–157 (LTMNISYNEIVSLPSLPQ), 158–179 (ALKNLRATRNFLTELPAFSEGN), 182–203 (VVREYFFDRNQISHIPESILNL), and 205–228 (NECSIHISDNPLSSHALQALQRLT). Residues 243-250 (SDGQQNTL) are linker. The segment at 251–545 (HRPLADAVTA…SENGSQLHHS (295 aa)) is E3 ubiquitin-protein ligase catalytic domain. The NEL domain occupies 253-545 (PLADAVTAWF…SENGSQLHHS (293 aa)). Cys-337 serves as the catalytic Glycyl thioester intermediate.

This sequence belongs to the LRR-containing bacterial E3 ligase family. As to quaternary structure, also interacts with human and mouse U2AF1 (U2AF35). Ubiquitinated in the presence of host E1 ubiquitin-activating enzyme, E2 ubiquitin-conjugating enzyme and ubiquitin.

The protein localises to the secreted. It is found in the host cytoplasm. The protein resides in the host nucleus. It catalyses the reaction S-ubiquitinyl-[E2 ubiquitin-conjugating enzyme]-L-cysteine + [acceptor protein]-L-lysine = [E2 ubiquitin-conjugating enzyme]-L-cysteine + N(6)-ubiquitinyl-[acceptor protein]-L-lysine.. With respect to regulation, exists in an autoinhibited state in the absence of substrate protein, due to interactions of the leucine-rich repeats with NEL domain. Is activated upon binding to a substrate protein. Its function is as follows. Effector E3 ubiquitin ligase that interferes with host's ubiquitination pathway and modulates the acute inflammatory responses, thus facilitating bacterial colonization within the host cell. Interacts with IKBKG (NEMO) and TNIP1 (ABIN-1), a ubiquitin-binding adapter protein, which results in TNIP1-dependent 'Lys-27'-linked polyubiquitination of IKBKG. Consequently, polyubiquitinated IKBKG undergoes proteasome-dependent degradation, which perturbs NF-kappa-B activation during bacterial infection. Mediates polyubiquitination of host U2AF1, leading to its proteasomal degradation. Catalyzes 'Lys-48'-linked polyubiquitination and subsequent degradation of a subset of host guanylate-binding proteins (GBP1, GBP2, GBP4 and GBP6), thereby suppressing host cell defense. In contrast, host GBP3 and GBP7 are not ubiquitinated by IpaH9.8. Uses UBE2D2 (UBCH5B) as an E2 ubiquitin-conjugating enzyme. The sequence is that of E3 ubiquitin-protein ligase ipaH9.8 (ipaH9.8) from Shigella flexneri serotype X (strain 2002017).